Consider the following 430-residue polypeptide: Glutamate-1-semialdehyde 2,1-aminomutase 2 (430 aa).

Residue Lys-269 is modified to N6-(pyridoxal phosphate)lysine.

It belongs to the class-III pyridoxal-phosphate-dependent aminotransferase family. HemL subfamily. Homodimer. Requires pyridoxal 5'-phosphate as cofactor.

Its subcellular location is the cytoplasm. It carries out the reaction (S)-4-amino-5-oxopentanoate = 5-aminolevulinate. The protein operates within porphyrin-containing compound metabolism; protoporphyrin-IX biosynthesis; 5-aminolevulinate from L-glutamyl-tRNA(Glu): step 2/2. The chain is Glutamate-1-semialdehyde 2,1-aminomutase 2 from Bacillus pumilus (strain SAFR-032).